The primary structure comprises 220 residues: Eukaryotic translation initiation factor 3 subunit B (220 aa).

A sufficient for interaction with HCR1 and TIF32 region spans residues 1–94 (MPEPIAFDES…LIIELDSAAA (94 aa)). Residues 1–220 (MPEPIAFDES…GVQAWGGERI (220 aa)) form a sufficient for interaction with PIC8 region. The region spanning 37–120 (HFVICDGAPI…HRLAVNKLPD (84 aa)) is the RRM domain.

The protein belongs to the eIF-3 subunit B family. Component of the eukaryotic translation initiation factor 3 (eIF-3) complex.

The protein localises to the cytoplasm. Its function is as follows. RNA-binding component of the eukaryotic translation initiation factor 3 (eIF-3) complex, which is involved in protein synthesis of a specialized repertoire of mRNAs and, together with other initiation factors, stimulates binding of mRNA and methionyl-tRNAi to the 40S ribosome. The eIF-3 complex specifically targets and initiates translation of a subset of mRNAs involved in cell proliferation. The sequence is that of Eukaryotic translation initiation factor 3 subunit B (TIF32) from Pichia angusta (Yeast).